The primary structure comprises 1006 residues: E3 ubiquitin-protein ligase MIB1 (1006 aa).

In terms of domain architecture, MIB/HERC2 1 spans N6–A74. A ZZ-type zinc finger spans residues H80–S132. Zn(2+) contacts are provided by C85, C88, C100, C103, C109, C112, H118, and H122. The 79-residue stretch at S143 to A221 folds into the MIB/HERC2 2 domain. S408 carries the post-translational modification Phosphoserine. 9 ANK repeats span residues D430–G460, A463–A492, D496–A525, R529–L558, E562–I591, N595–E627, D631–I661, N665–I694, and D698–A729. 2 RING-type zinc fingers span residues C819 to K854 and C866 to R901. Positions Q935–M962 form a coiled coil. Residues C963–R996 form an RING-type 3 zinc finger.

As to quaternary structure, interacts with CEP131 and PCM1. Ubiquitinated; possibly via autoubiquitination. Ubiquitinated; this modification is inhibited in response to cellular stress, such as ultraviolet light (UV) radiation or heat shock. Widely expressed at low level. Expressed at higher level in spinal cord, ovary, whole brain, and all specific brain regions examined.

It localises to the cytoplasm. The protein localises to the cytoskeleton. The protein resides in the microtubule organizing center. Its subcellular location is the centrosome. It is found in the centriolar satellite. It localises to the cell membrane. The enzyme catalyses S-ubiquitinyl-[E2 ubiquitin-conjugating enzyme]-L-cysteine + [acceptor protein]-L-lysine = [E2 ubiquitin-conjugating enzyme]-L-cysteine + N(6)-ubiquitinyl-[acceptor protein]-L-lysine.. The protein operates within protein modification; protein ubiquitination. Functionally, E3 ubiquitin-protein ligase that mediates ubiquitination of Delta receptors, which act as ligands of Notch proteins. Positively regulates the Delta-mediated Notch signaling by ubiquitinating the intracellular domain of Delta, leading to endocytosis of Delta receptors. Probably mediates ubiquitination and subsequent proteasomal degradation of DAPK1, thereby antagonizing anti-apoptotic effects of DAPK1 to promote TNF-induced apoptosis. Involved in ubiquitination of centriolar satellite CEP131, CEP290 and PCM1 proteins and hence inhibits primary cilium formation in proliferating cells. Mediates 'Lys-63'-linked polyubiquitination of TBK1, which probably participates in kinase activation. Its function is as follows. (Microbial infection) During adenovirus infection, mediates ubiquitination of Core-capsid bridging protein. This allows viral genome delivery into nucleus for infection. This Homo sapiens (Human) protein is E3 ubiquitin-protein ligase MIB1 (MIB1).